The sequence spans 772 residues: Metal transporter CNNM4 (772 aa).

At 1-175 (MAPGGGGGRR…SLLFMVEEHG (175 aa)) the chain is on the extracellular side. The N-linked (GlcNAc...) asparagine glycan is linked to Asn120. The chain crosses the membrane as a helical span at residues 176-196 (RFLPLWLHILLVLVLLVLSGI). The region spanning 176-356 (RFLPLWLHIL…EPYNDLVKEE (181 aa)) is the CNNM transmembrane domain. Over 197 to 237 (FSGLNLGLMALDPMELRIVQNCGTEKERRYARKIEPIRRKG) the chain is Cytoplasmic. Positions 238–258 (NYLLCSLLLGNVLVNTSLTIL) form an intramembrane region, helical. Topologically, residues 259–261 (LDN) are cytoplasmic. Residues 262 to 282 (LIGSGIMAVASSTIGIVIFGE) form a helical membrane-spanning segment. Residues 283-290 (ILPQALCS) lie on the Extracellular side of the membrane. The helical transmembrane segment at 291-313 (RHGLAVGANTIVLTKIFMLLTFP) threads the bilayer. Topologically, residues 314-772 (LSFPISKLLD…LHRASQEGTI (459 aa)) are cytoplasmic. CBS domains lie at 375–436 (MTQL…CTPL) and 443–509 (YNHP…ILDE). The interval 647 to 676 (PDRSPAHPTPLSRSASLSYPDRNTDMTPSS) is disordered. Ser658, Ser662, and Ser767 each carry phosphoserine.

This sequence belongs to the ACDP family. As to quaternary structure, interacts with COX11. In terms of tissue distribution, present in spinal cord dorsal horn neurons and in developing teeth (at protein level). In the tooth, higher expression is found in the ameloblasts during the transition and maturation phases of amelogenesis; reduced expression in the odontoblasts.

Its subcellular location is the cell membrane. Functionally, probable metal transporter. The interaction with the metal ion chaperone COX11 suggests that it may play a role in sensory neuron functions. May play a role in biomineralization and retinal function. In Rattus norvegicus (Rat), this protein is Metal transporter CNNM4 (Cnnm4).